A 553-amino-acid chain; its full sequence is Putative transport protein YidE (553 aa).

Helical transmembrane passes span 4–24, 28–48, 65–85, 95–115, and 158–178; these read IALT…IGNV, GIGL…HFVS, FGLI…FFAS, LFAV…HKLF, and MSYA…MWML. RCK C-terminal domains follow at residues 191–276 and 279–361; these read QQHE…VIGQ and DTSL…VLGN. 6 consecutive transmembrane segments (helical) span residues 371–391, 393–413, 439–459, 464–484, 493–513, and 533–553; these read MLPV…PVFV, GFPA…ALIL, IVLF…NTLV, LSWI…VGIL, YLTM…LAFA, and LVMF…WSIG.

Belongs to the AAE transporter (TC 2.A.81) family. YidE subfamily.

The protein resides in the cell membrane. The chain is Putative transport protein YidE from Escherichia coli (strain ATCC 8739 / DSM 1576 / NBRC 3972 / NCIMB 8545 / WDCM 00012 / Crooks).